The sequence spans 199 residues: Peptidyl-tRNA hydrolase (199 aa).

Tyr-15 contributes to the tRNA binding site. The active-site Proton acceptor is His-20. Positions 66, 68, and 114 each coordinate tRNA.

This sequence belongs to the PTH family. In terms of assembly, monomer.

Its subcellular location is the cytoplasm. It catalyses the reaction an N-acyl-L-alpha-aminoacyl-tRNA + H2O = an N-acyl-L-amino acid + a tRNA + H(+). In terms of biological role, hydrolyzes ribosome-free peptidyl-tRNAs (with 1 or more amino acids incorporated), which drop off the ribosome during protein synthesis, or as a result of ribosome stalling. Catalyzes the release of premature peptidyl moieties from peptidyl-tRNA molecules trapped in stalled 50S ribosomal subunits, and thus maintains levels of free tRNAs and 50S ribosomes. The sequence is that of Peptidyl-tRNA hydrolase from Burkholderia multivorans (strain ATCC 17616 / 249).